A 783-amino-acid polypeptide reads, in one-letter code: Glucosidase YgjK (783 aa).

A signal peptide spans 1–22 (MKIKTILTPVTCALLISFSAHA). Positions 24–254 (NADNYKNVIN…TTLYTTYSHL (231 aa)) are N-terminal domain. Residues 254–299 (LLTAQEVSKEQMQIRDILARPAFYLTASQQRWEEYLKKGLTNPDAT) form a linker region. Residues 300 to 783 (PEQTRVAVKA…MLYNDFFRKQ (484 aa)) are a domain. Residues Asp-454, Asn-456, Asn-458, Val-460, and Glu-462 each contribute to the Ca(2+) site. The Proton donor role is filled by Asp-524. Glu-572 serves as a coordination point for Ca(2+). The active-site Proton acceptor is the Glu-750.

The protein belongs to the glycosyl hydrolase 63 family.

Functionally, glucoside hydrolase that cleaves the alpha-1,3-glucosidic linkage in nigerose. Has very low activity towards maltooligosaccharides, soluble starch, nigerotriose, kojibiose and trehalose. This Escherichia coli (strain K12) protein is Glucosidase YgjK (ygjK).